The primary structure comprises 492 residues: Bifunctional protein GlmU (492 aa).

The pyrophosphorylase stretch occupies residues 1-241 (MTFRGDTAVV…SALVAGVNDR (241 aa)). Residues 12–15 (LAAG), Lys26, Gln83, and 88–89 (GT) each bind UDP-N-acetyl-alpha-D-glucosamine. Asp114 provides a ligand contact to Mg(2+). Residues Gly151, Glu166, Asn181, and Asn239 each coordinate UDP-N-acetyl-alpha-D-glucosamine. Asn239 provides a ligand contact to Mg(2+). A linker region spans residues 242–262 (VQLAQLGAELNRRIVAAHQMA). Residues 263–492 (GVTVIDPATT…TPPPDADQTP (230 aa)) are N-acetyltransferase. UDP-N-acetyl-alpha-D-glucosamine contacts are provided by Arg344 and Lys362. The active-site Proton acceptor is the His374. Residues Tyr377 and Asn388 each contribute to the UDP-N-acetyl-alpha-D-glucosamine site. Acetyl-CoA-binding positions include Ala391, 397–398 (NY), and Ala434. Residues 451–492 (GGPQRNIEDWVQQKRPGTPSAEAARKASAEQSTPPPDADQTP) form a disordered region. Residues 483 to 492 (TPPPDADQTP) show a composition bias toward pro residues.

The protein in the N-terminal section; belongs to the N-acetylglucosamine-1-phosphate uridyltransferase family. It in the C-terminal section; belongs to the transferase hexapeptide repeat family. Homotrimer. The cofactor is Mg(2+).

It is found in the cytoplasm. The catalysed reaction is alpha-D-glucosamine 1-phosphate + acetyl-CoA = N-acetyl-alpha-D-glucosamine 1-phosphate + CoA + H(+). The enzyme catalyses N-acetyl-alpha-D-glucosamine 1-phosphate + UTP + H(+) = UDP-N-acetyl-alpha-D-glucosamine + diphosphate. The protein operates within nucleotide-sugar biosynthesis; UDP-N-acetyl-alpha-D-glucosamine biosynthesis; N-acetyl-alpha-D-glucosamine 1-phosphate from alpha-D-glucosamine 6-phosphate (route II): step 2/2. It functions in the pathway nucleotide-sugar biosynthesis; UDP-N-acetyl-alpha-D-glucosamine biosynthesis; UDP-N-acetyl-alpha-D-glucosamine from N-acetyl-alpha-D-glucosamine 1-phosphate: step 1/1. It participates in bacterial outer membrane biogenesis; LPS lipid A biosynthesis. Catalyzes the last two sequential reactions in the de novo biosynthetic pathway for UDP-N-acetylglucosamine (UDP-GlcNAc). The C-terminal domain catalyzes the transfer of acetyl group from acetyl coenzyme A to glucosamine-1-phosphate (GlcN-1-P) to produce N-acetylglucosamine-1-phosphate (GlcNAc-1-P), which is converted into UDP-GlcNAc by the transfer of uridine 5-monophosphate (from uridine 5-triphosphate), a reaction catalyzed by the N-terminal domain. The protein is Bifunctional protein GlmU of Mycobacterium marinum (strain ATCC BAA-535 / M).